Consider the following 1982-residue polypeptide: Ras guanine nucleotide exchange factor V (1982 aa).

LRR repeat units lie at residues 1–26 (MGNI…SLEG), 47–68 (LTQL…ITNL), 69–94 (SNLS…PFKP), 105–128 (NENL…VFVL), 130–151 (NLKQ…LCGG), 164–187 (ACQL…IGDQ), 188–210 (LTTL…SFSN), 212–234 (VSLT…LCTL), 236–257 (KLVH…HTLG), 261–284 (LPSL…ILEI), 286–307 (SLRV…IGNL), 308–330 (LNLN…IGEL), 331–352 (INLR…EFSK), 354–376 (SKLN…LHSL), and 378–399 (QLLR…LIKS). The Extracellular segment spans residues 1-1831 (MGNINSICLN…IANAFYELRN (1831 aa)). Disordered stretches follow at residues 414 to 436 (YGST…STHG), 457 to 532 (NQIN…NKKQ), and 615 to 654 (NNSG…RRGS). Low complexity-rich tracts occupy residues 415–436 (GSTM…STHG) and 457–495 (NQIN…TPNG). An LRR 16 repeat occupies 443-466 (DILLSSVTLNNSILNQINNNNNNN). The segment covering 506–520 (LTISRSLFRGNSSNL) has biased composition (polar residues). Residues 515-567 (GNSSNLESEKEDFINKKQQQQQQQQQQQQQQQQQQQQQQQQQQQQQQQQQQLG) adopt a coiled-coil conformation. Residues 592–615 (EDDIQKMQLGLEALSNLETSIGSN) form an LRR 17 repeat. The span at 616-642 (NSGGGDSMNGSGGNINNSGGSGSGCGT) shows a compositional bias: gly residues. LRR repeat units lie at residues 657-684 (LPPT…VMSG) and 773-796 (HSNL…LSSS). Disordered regions lie at residues 756-778 (QSST…NLSQ) and 807-829 (LQFQ…SNQP). The region spanning 832–1236 (TIVPSFSKFK…QIKYSIDRYG (405 aa)) is the GBD/FH3 domain. LRR repeat units lie at residues 979 to 1003 (LLGI…GYCL), 1075 to 1100 (SPYV…VFKI), 1239 to 1263 (VPAI…RWVD), and 1689 to 1712 (VQNM…FVDL). Residues 1595–1717 (KDRRVSSVTL…LFVDLSTKSY (123 aa)) form the N-terminal Ras-GEF domain. The Ras-GEF domain occupies 1747–1974 (DEIEIARQLS…YEMSLSAEPR (228 aa)). Residues 1832–1848 (YHLLMAIISGLNASPVL) form a helical membrane-spanning segment. Topologically, residues 1849-1982 (RLKYTKGKLS…PRNAERYDIQ (134 aa)) are cytoplasmic. 2 LRR repeats span residues 1865–1888 (LDTL…LAAA) and 1917–1941 (RINF…LFPY).

The protein localises to the membrane. In terms of biological role, promotes the exchange of Ras-bound GDP by GTP. This chain is Ras guanine nucleotide exchange factor V (gefV), found in Dictyostelium discoideum (Social amoeba).